The sequence spans 104 residues: Secreted RxLR effector protein 54 (104 aa).

The N-terminal stretch at 1–19 is a signal peptide; sequence MIFTLLGLALVATKSACIA. The RxLR motif lies at 52–55; that stretch reads RSLR. N64 is a glycosylation site (N-linked (GlcNAc...) asparagine).

The protein belongs to the RxLR effector family.

The protein resides in the secreted. It is found in the host chloroplast envelope. It localises to the host mitochondrion. Its subcellular location is the host nucleus. The protein localises to the host cytoplasm. Its function is as follows. Secreted effector that completely suppresses the host cell death induced by cell death-inducing proteins. The sequence is that of Secreted RxLR effector protein 54 from Plasmopara viticola (Downy mildew of grapevine).